The sequence spans 315 residues: NAD-dependent protein deacylase sirtuin-5, mitochondrial (315 aa).

Residues 1–39 constitute a mitochondrion transit peptide; sequence MSLLHFATRRLILQVLRELGLKAPPVHKTLKICIAMSRP. Positions 40 to 312 constitute a Deacetylase sirtuin-type domain; that stretch reads SSNMADFRRF…PEALSPHESE (273 aa). 61 to 80 is a binding site for NAD(+); the sequence is GAGVSAESGVPTFRGPGGFW. 2 residues coordinate substrate: Tyr105 and Arg108. 143-146 provides a ligand contact to NAD(+); that stretch reads QNID. Residue His161 is the Proton acceptor of the active site. Residues 254–256, 280–282, and Cys298 each bind NAD(+); these read GTS and NTV.

The protein belongs to the sirtuin family. Class III subfamily. In terms of assembly, monomer. Homodimer. Interacts with CPS1.

The protein resides in the mitochondrion. It localises to the cytoplasm. The protein localises to the cytosol. It is found in the nucleus. The catalysed reaction is N(6)-malonyl-L-lysyl-[protein] + NAD(+) + H2O = 2''-O-malonyl-ADP-D-ribose + nicotinamide + L-lysyl-[protein]. It carries out the reaction N(6)-succinyl-L-lysyl-[protein] + NAD(+) + H2O = 2''-O-succinyl-ADP-D-ribose + nicotinamide + L-lysyl-[protein]. It catalyses the reaction N(6)-glutaryl-L-lysyl-[protein] + NAD(+) + H2O = 2''-O-glutaryl-ADP-D-ribose + nicotinamide + L-lysyl-[protein]. NAD-dependent lysine demalonylase, desuccinylase and deglutarylase that specifically removes malonyl, succinyl and glutaryl groups on target proteins. Activates CPS1 and contributes to the regulation of blood ammonia levels during prolonged fasting: acts by mediating desuccinylation and deglutarylation of CPS1, thereby increasing CPS1 activity in response to elevated NAD levels during fasting. Activates SOD1 by mediating its desuccinylation, leading to reduced reactive oxygen species. Activates SHMT2 by mediating its desuccinylation. Modulates ketogenesis through the desuccinylation and activation of HMGCS2. Has weak NAD-dependent protein deacetylase activity; however this activity may not be physiologically relevant in vivo. Can deacetylate cytochrome c (CYCS) and a number of other proteins in vitro such as UOX. This chain is NAD-dependent protein deacylase sirtuin-5, mitochondrial, found in Monodelphis domestica (Gray short-tailed opossum).